A 643-amino-acid polypeptide reads, in one-letter code: 1-deoxy-D-xylulose-5-phosphate synthase (643 aa).

Thiamine diphosphate-binding positions include His72 and 113 to 115 (GHA). Asp144 contributes to the Mg(2+) binding site. Thiamine diphosphate is bound by residues 145–146 (GA), Asn174, Tyr287, and Glu370. Residue Asn174 coordinates Mg(2+).

The protein belongs to the transketolase family. DXPS subfamily. In terms of assembly, homodimer. It depends on Mg(2+) as a cofactor. Thiamine diphosphate serves as cofactor.

The enzyme catalyses D-glyceraldehyde 3-phosphate + pyruvate + H(+) = 1-deoxy-D-xylulose 5-phosphate + CO2. It participates in metabolic intermediate biosynthesis; 1-deoxy-D-xylulose 5-phosphate biosynthesis; 1-deoxy-D-xylulose 5-phosphate from D-glyceraldehyde 3-phosphate and pyruvate: step 1/1. Catalyzes the acyloin condensation reaction between C atoms 2 and 3 of pyruvate and glyceraldehyde 3-phosphate to yield 1-deoxy-D-xylulose-5-phosphate (DXP). The sequence is that of 1-deoxy-D-xylulose-5-phosphate synthase from Synechococcus sp. (strain CC9605).